The chain runs to 502 residues: tRNA-2-methylthio-N(6)-dimethylallyladenosine synthase (502 aa).

The 118-residue stretch at 12 to 129 (RTYQVRTYGC…LPVLLERARH (118 aa)) folds into the MTTase N-terminal domain. [4Fe-4S] cluster contacts are provided by Cys21, Cys58, Cys92, Cys166, Cys170, and Cys173. Residues 152 to 383 (RESTYAGWVS…ACVEEITWAE (232 aa)) form the Radical SAM core domain. The TRAM domain occupies 385 to 455 (RRLVGETVEV…PHHLNADGEP (71 aa)). A disordered region spans residues 451 to 502 (ADGEPLAHRRTPAGDAAEAGRRPRTAGVSLGLPTVGAPPSPVPPAASSACAC).

Belongs to the methylthiotransferase family. MiaB subfamily. As to quaternary structure, monomer. Requires [4Fe-4S] cluster as cofactor.

It is found in the cytoplasm. The catalysed reaction is N(6)-dimethylallyladenosine(37) in tRNA + (sulfur carrier)-SH + AH2 + 2 S-adenosyl-L-methionine = 2-methylsulfanyl-N(6)-dimethylallyladenosine(37) in tRNA + (sulfur carrier)-H + 5'-deoxyadenosine + L-methionine + A + S-adenosyl-L-homocysteine + 2 H(+). Functionally, catalyzes the methylthiolation of N6-(dimethylallyl)adenosine (i(6)A), leading to the formation of 2-methylthio-N6-(dimethylallyl)adenosine (ms(2)i(6)A) at position 37 in tRNAs that read codons beginning with uridine. In Salinispora arenicola (strain CNS-205), this protein is tRNA-2-methylthio-N(6)-dimethylallyladenosine synthase.